Consider the following 293-residue polypeptide: Zinc finger protein 80 (293 aa).

2 consecutive C2H2-type zinc fingers follow at residues 69-91 (YKCKECGKVFNKNSLLVRHHQIH) and 97-119 (YECQECGKAFHEKVDFVRHMRIH). The C2H2-type 3; atypical zinc finger occupies 125–147 (CKCVECGKVFNRRSHLLCYHQIH). C2H2-type zinc fingers lie at residues 153–175 (YECSECGKTFSYHSVFIQHRMTH), 181–203 (FGCKECGKTFYYNSSLTRHMKIH), 209–231 (YKCGECGKTFTYHSVFFRHSMTH), and 237–259 (YECKECGKGFYYSYSLTRHTRSH).

The protein belongs to the krueppel C2H2-type zinc-finger protein family.

It is found in the nucleus. In terms of biological role, may be involved in transcriptional regulation. The sequence is that of Zinc finger protein 80 (ZNF80) from Macaca mulatta (Rhesus macaque).